The following is a 421-amino-acid chain: C2H2 type master regulator of conidiophore development brlA (421 aa).

Over residues 228-242 the composition is skewed to polar residues; that stretch reads THSPTTPLRSCSIGT. Residues 228–247 form a disordered region; the sequence is THSPTTPLRSCSIGTASGPD. C2H2-type zinc fingers lie at residues 309 to 333 and 339 to 364; these read FKCKEPGCKGRFKRQEHLKRHMKSH and HVCWVPGCERAFSRSDNLNAHYTKTH. Residues 361 to 370 are compositionally biased toward basic residues; sequence TKTHSKRGGR. Residues 361–421 are disordered; sequence TKTHSKRGGR…REYSVDGLDD (61 aa).

The protein resides in the nucleus. Its function is as follows. BrlA, abaA and wetA are pivotal regulators of conidiophore development and conidium maturation. They act individually and together to regulate their own expression and that of numerous other sporulation-specific genes. Binds promoters of target genes at brlA response elements (BREs) containing the conserved sequence 5'-(C/A)(A/G)AGGG(G/A)-3'. The chain is C2H2 type master regulator of conidiophore development brlA from Aspergillus parasiticus (strain ATCC 56775 / NRRL 5862 / SRRC 143 / SU-1).